We begin with the raw amino-acid sequence, 198 residues long: Zinc finger protein 41 homolog (198 aa).

Positions 1 to 12 (MEKPAGRKKKTP) are enriched in basic residues. Residues 1–55 (MEKPAGRKKKTPTPREEADVQKSALREEKVSGDRKPPERPTVPRKPRTEPCLSPE) are disordered. Basic and acidic residues predominate over residues 13 to 38 (TPREEADVQKSALREEKVSGDRKPPE). 4 C2H2-type zinc fingers span residues 87–109 (YECS…QRVH), 115–137 (FKCA…QRTH), 143–165 (FKCG…QKTH), and 171–193 (YECT…QKRH).

Belongs to the krueppel C2H2-type zinc-finger protein family.

It localises to the nucleus. A putative DNA-binding regulatory protein associated with meiosis in spermatogenesis. The sequence is that of Zinc finger protein 41 homolog (ZFP41) from Homo sapiens (Human).